The chain runs to 528 residues: Peptide chain release factor 3 (528 aa).

Residues 10-278 (DRRRTFGIIS…AFVEQAPVPR (269 aa)) enclose the tr-type G domain. GTP is bound by residues 19–26 (SHPDAGKT), 87–91 (DTPGH), and 141–144 (NKLD).

This sequence belongs to the TRAFAC class translation factor GTPase superfamily. Classic translation factor GTPase family. PrfC subfamily.

The protein resides in the cytoplasm. Functionally, increases the formation of ribosomal termination complexes and stimulates activities of RF-1 and RF-2. It binds guanine nucleotides and has strong preference for UGA stop codons. It may interact directly with the ribosome. The stimulation of RF-1 and RF-2 is significantly reduced by GTP and GDP, but not by GMP. The protein is Peptide chain release factor 3 of Syntrophotalea carbinolica (strain DSM 2380 / NBRC 103641 / GraBd1) (Pelobacter carbinolicus).